The primary structure comprises 125 residues: Apolipoprotein C-IV (125 aa).

A signal peptide spans 1–27 (MSLLRQRLQALPVLCLCVLVLACIGAC).

The protein belongs to the apolipoprotein C4 family.

It localises to the secreted. Functionally, may participate in lipoprotein metabolism. In Plecturocebus moloch (Dusky titi monkey), this protein is Apolipoprotein C-IV (APOC4).